The following is a 255-amino-acid chain: F-box/SPRY domain-containing protein 1 (255 aa).

Residues 3–51 (DPVAALCNYNVLEVIFSYLELDDLSHCSQVCKSWYHFLNDENSDVWRWH) enclose the F-box domain. A B30.2/SPRY domain is found at 61–253 (LKSDLLSSVP…VSMVYLGTPL (193 aa)).

The protein belongs to the FBXO45/Fsn family. In terms of assembly, component of an E3 ubiquitin ligase complex composed of hiw and Fsn.

The protein resides in the synapse. The protein operates within protein modification; protein ubiquitination. Required in the presynaptic motoneuron to down-regulate the levels of wnd and restrain synaptic terminal growth at the neuromuscular junction (NMJ). This Drosophila sechellia (Fruit fly) protein is F-box/SPRY domain-containing protein 1.